Here is a 190-residue protein sequence, read N- to C-terminus: Putative histone H1.6 (190 aa).

Positions 1-29 (MSDVAVAETPAVKTPTKAPKANATKVPKV) are disordered. Residue serine 2 is modified to N-acetylserine. Residues 9–29 (TPAVKTPTKAPKANATKVPKV) show a composition bias toward low complexity. The H15 domain maps to 34-110 (AHPPFINMVT…GATGRFRVAE (77 aa)). Residues 141–190 (KKTGDKVKKAKSPKKIAKPAAKKATKSPSKKVAPKKAAAKPAKKTAALKA) form a disordered region. Basic residues predominate over residues 148–183 (KKAKSPKKIAKPAAKKATKSPSKKVAPKKAAAKPAK).

This sequence belongs to the histone H1/H5 family.

Its subcellular location is the nucleus. The protein localises to the chromosome. In terms of biological role, histones H1 are necessary for the condensation of nucleosome chains into higher-order structures. The protein is Putative histone H1.6 (hil-6) of Caenorhabditis elegans.